The following is a 728-amino-acid chain: Catalase-peroxidase (728 aa).

The segment at residues 91–218 (WHSAGTYRTA…LAAVQMGLIY (128 aa)) is a cross-link (tryptophyl-tyrosyl-methioninium (Trp-Tyr) (with M-244)). The active-site Proton acceptor is the His92. The tryptophyl-tyrosyl-methioninium (Tyr-Met) (with W-91) cross-link spans 218 to 244 (YVNPEGPDGNPDPVAAARDIRDTFARM). His259 provides a ligand contact to heme b.

The protein belongs to the peroxidase family. Peroxidase/catalase subfamily. Homodimer or homotetramer. The cofactor is heme b. Post-translationally, formation of the three residue Trp-Tyr-Met cross-link is important for the catalase, but not the peroxidase activity of the enzyme.

It catalyses the reaction H2O2 + AH2 = A + 2 H2O. The enzyme catalyses 2 H2O2 = O2 + 2 H2O. Its function is as follows. Bifunctional enzyme with both catalase and broad-spectrum peroxidase activity. The protein is Catalase-peroxidase of Burkholderia pseudomallei (strain 1710b).